Here is a 438-residue protein sequence, read N- to C-terminus: Thymidine phosphorylase (438 aa).

The protein belongs to the thymidine/pyrimidine-nucleoside phosphorylase family. In terms of assembly, homodimer.

It carries out the reaction thymidine + phosphate = 2-deoxy-alpha-D-ribose 1-phosphate + thymine. It functions in the pathway pyrimidine metabolism; dTMP biosynthesis via salvage pathway; dTMP from thymine: step 1/2. In terms of biological role, the enzymes which catalyze the reversible phosphorolysis of pyrimidine nucleosides are involved in the degradation of these compounds and in their utilization as carbon and energy sources, or in the rescue of pyrimidine bases for nucleotide synthesis. The polypeptide is Thymidine phosphorylase (Agrobacterium fabrum (strain C58 / ATCC 33970) (Agrobacterium tumefaciens (strain C58))).